The following is a 471-amino-acid chain: MENFKHLPEPFRIRVIEPVKRTTRAYREEAIIKSGMNPFLLDSEDVFIDLLTDSGTGAVTQSMQAAMMRGDEAYSGSRSYYALAESVKNIFGYQYTIPTHQGRGAEQIYIPVLIKKREQEKGLDRSKMVAFSNYFFDTTQGHSQINGCTVRNVYIKEAFDTGVRYDFKGNFDLEGLERGIEEVGPNNVPYIVATITSNSAGGQPVSLANLKAMYSIAKKYDIPVVMDSARFAENAYFIKQREAEYKDWTIEQITRETYKYADMLAMSAKKDAMVPMGGLLCVKDDSLFDVYTECRTLCVVQEGFPTYGGLEGGAMERLAVGLYDGMNLDWLAYRIAQVQYLVDGLEEIGVVCQQAGGHAAFVDAGKLLPHIPADQFPAQALACELYKVAGIRAVEIGSFLLGRDPKTGKQLPCPAELLRLTIPRATYTQTHMDFIIEAFKHVKENAANIKGLTFTYEPKVLRHFTAKLKEV.

An N6-acetyllysine mark is found at Lys-5, Lys-115, and Lys-156. N6-(pyridoxal phosphate)lysine is present on Lys-270. Lys-450 carries the N6-acetyllysine modification.

The protein belongs to the beta-eliminating lyase family. As to quaternary structure, homotetramer. Pyridoxal 5'-phosphate serves as cofactor.

It catalyses the reaction L-tryptophan + H2O = indole + pyruvate + NH4(+). Its pathway is amino-acid degradation; L-tryptophan degradation via pyruvate pathway; indole and pyruvate from L-tryptophan: step 1/1. This Escherichia fergusonii (strain ATCC 35469 / DSM 13698 / CCUG 18766 / IAM 14443 / JCM 21226 / LMG 7866 / NBRC 102419 / NCTC 12128 / CDC 0568-73) protein is Tryptophanase.